A 571-amino-acid chain; its full sequence is Putative clathrin assembly protein At2g01600 (571 aa).

Residues Arg-24–Thr-161 enclose the ENTH domain. 2 disordered regions span residues Tyr-325–Leu-346 and Pro-474–Ile-571. Basic and acidic residues predominate over residues Glu-337–Leu-346. A compositionally biased stretch (low complexity) spans Gln-508–Gln-522. Polar residues-rich tracts occupy residues Ser-523–Pro-532 and Pro-543–Ile-571.

It localises to the membrane. It is found in the clathrin-coated pit. Its subcellular location is the golgi apparatus. The protein localises to the cytoplasmic vesicle. The protein resides in the clathrin-coated vesicle. This is Putative clathrin assembly protein At2g01600 from Arabidopsis thaliana (Mouse-ear cress).